We begin with the raw amino-acid sequence, 371 residues long: tRNA-specific 2-thiouridylase MnmA (371 aa).

Residues 8–15 (GMSGGVDS) and methionine 34 contribute to the ATP site. The interval 94 to 96 (NPD) is interaction with target base in tRNA. Catalysis depends on cysteine 99, which acts as the Nucleophile. Cysteine 99 and cysteine 195 are joined by a disulfide. Glycine 123 is a binding site for ATP. Residues 145–147 (KDQ) form an interaction with tRNA region. The Cysteine persulfide intermediate role is filled by cysteine 195. The tract at residues 309 to 310 (RY) is interaction with tRNA.

This sequence belongs to the MnmA/TRMU family.

Its subcellular location is the cytoplasm. The enzyme catalyses S-sulfanyl-L-cysteinyl-[protein] + uridine(34) in tRNA + AH2 + ATP = 2-thiouridine(34) in tRNA + L-cysteinyl-[protein] + A + AMP + diphosphate + H(+). In terms of biological role, catalyzes the 2-thiolation of uridine at the wobble position (U34) of tRNA, leading to the formation of s(2)U34. The polypeptide is tRNA-specific 2-thiouridylase MnmA (Methylococcus capsulatus (strain ATCC 33009 / NCIMB 11132 / Bath)).